The following is an 89-amino-acid chain: Small ribosomal subunit protein uS15 (89 aa).

Residues 1–24 (MSLNAEQKSEIVEQFRRSPSDTGS) are disordered. Residues 7-19 (QKSEIVEQFRRSP) show a composition bias toward basic and acidic residues.

The protein belongs to the universal ribosomal protein uS15 family. Part of the 30S ribosomal subunit. Forms a bridge to the 50S subunit in the 70S ribosome, contacting the 23S rRNA.

One of the primary rRNA binding proteins, it binds directly to 16S rRNA where it helps nucleate assembly of the platform of the 30S subunit by binding and bridging several RNA helices of the 16S rRNA. Its function is as follows. Forms an intersubunit bridge (bridge B4) with the 23S rRNA of the 50S subunit in the ribosome. The chain is Small ribosomal subunit protein uS15 from Halorhodospira halophila (strain DSM 244 / SL1) (Ectothiorhodospira halophila (strain DSM 244 / SL1)).